The chain runs to 381 residues: MSLNMFWFLPTHGDGHYLGTEAGSRPVDHGYLQQIAQTADRLGFTGVLIPTGRSCEDAWLVAASMIPVTQRLKFLVALRPSVTSPTVAARQAATLDRLSNGRALFNLVTGSDPQELAGDGVFLDHTERYEASSEFTQVWRRLLQGETVDFNGKHIHVRGAKLFFPAIQQPYPPLYFGGSSDVAQDLAAEQVDLYLTWGEPPAQVKEKIEQVRAKAAARGRKIRFGIRLHVIVRETNEEAWRAADRLIAHLDDDTIAKAQAAFARTDSVGQHRMAALHNGKRDQLEISPNLWAGVGLVRGGAGTALVGDGPTVAARINEYAALGIDSFVLSGYPHLEEAYNVGELLFPHLDVAIPEIPQPQPLHQQGEAVANEFIPRKAAQS.

Belongs to the SsuD family. In terms of assembly, homotetramer.

The enzyme catalyses an alkanesulfonate + FMNH2 + O2 = an aldehyde + FMN + sulfite + H2O + 2 H(+). In terms of biological role, catalyzes the desulfonation of aliphatic sulfonates. The polypeptide is Alkanesulfonate monooxygenase (Citrobacter koseri (strain ATCC BAA-895 / CDC 4225-83 / SGSC4696)).